Consider the following 357-residue polypeptide: Probable leucine aminopeptidase MCYG_04170 (357 aa).

Residues 1-15 form the signal peptide; that stretch reads MKVLAALALSALALA. The N-linked (GlcNAc...) asparagine glycan is linked to asparagine 76. Histidine 167 and aspartate 185 together coordinate Zn(2+). An N-linked (GlcNAc...) asparagine glycan is attached at asparagine 186. Residues glutamate 224 and aspartate 251 each coordinate Zn(2+). Cysteines 291 and 295 form a disulfide. Histidine 324 contributes to the Zn(2+) binding site.

The protein belongs to the peptidase M28 family. M28E subfamily. As to quaternary structure, monomer. The cofactor is Zn(2+).

It is found in the secreted. Functionally, probable extracellular aminopeptidase which contributes to pathogenicity. The polypeptide is Probable leucine aminopeptidase MCYG_04170 (Arthroderma otae (strain ATCC MYA-4605 / CBS 113480) (Microsporum canis)).